The sequence spans 194 residues: 3-isopropylmalate dehydratase small subunit (194 aa).

Belongs to the LeuD family. LeuD type 1 subfamily. Heterodimer of LeuC and LeuD.

It carries out the reaction (2R,3S)-3-isopropylmalate = (2S)-2-isopropylmalate. It participates in amino-acid biosynthesis; L-leucine biosynthesis; L-leucine from 3-methyl-2-oxobutanoate: step 2/4. Functionally, catalyzes the isomerization between 2-isopropylmalate and 3-isopropylmalate, via the formation of 2-isopropylmaleate. This chain is 3-isopropylmalate dehydratase small subunit, found in Brevibacillus brevis (strain 47 / JCM 6285 / NBRC 100599).